The primary structure comprises 174 residues: Cytochrome c oxidase subunit 5A, mitochondrial (174 aa).

The transit peptide at 1–29 (MASLTRAVTRLAIAGRQAVRTIATTTPVS) directs the protein to the mitochondrion.

The protein belongs to the cytochrome c oxidase subunit 5A family. As to quaternary structure, component of the cytochrome c oxidase (complex IV, CIV), a multisubunit enzyme composed of a catalytic core of 3 subunits and several supernumerary subunits. The complex exists as a monomer or a dimer and forms supercomplexes (SCs) in the inner mitochondrial membrane with ubiquinol-cytochrome c oxidoreductase (cytochrome b-c1 complex, complex III, CIII).

The protein resides in the mitochondrion inner membrane. It functions in the pathway energy metabolism; oxidative phosphorylation. Functionally, component of the cytochrome c oxidase, the last enzyme in the mitochondrial electron transport chain which drives oxidative phosphorylation. The respiratory chain contains 3 multisubunit complexes succinate dehydrogenase (complex II, CII), ubiquinol-cytochrome c oxidoreductase (cytochrome b-c1 complex, complex III, CIII) and cytochrome c oxidase (complex IV, CIV), that cooperate to transfer electrons derived from NADH and succinate to molecular oxygen, creating an electrochemical gradient over the inner membrane that drives transmembrane transport and the ATP synthase. Cytochrome c oxidase is the component of the respiratory chain that catalyzes the reduction of oxygen to water. Electrons originating from reduced cytochrome c in the intermembrane space (IMS) are transferred via the dinuclear copper A center (CU(A)) of subunit 2 and heme A of subunit 1 to the active site in subunit 1, a binuclear center (BNC) formed by heme A3 and copper B (CU(B)). The BNC reduces molecular oxygen to 2 water molecules using 4 electrons from cytochrome c in the IMS and 4 protons from the mitochondrial matrix. This is Cytochrome c oxidase subunit 5A, mitochondrial from Caenorhabditis elegans.